We begin with the raw amino-acid sequence, 211 residues long: Uracil phosphoribosyltransferase (211 aa).

Residues Arg-78, Arg-103, and 130–138 (DPMLATGNS) contribute to the 5-phospho-alpha-D-ribose 1-diphosphate site. Residues Ile-193 and 198–200 (GDA) contribute to the uracil site. Residue Asp-199 participates in 5-phospho-alpha-D-ribose 1-diphosphate binding.

Belongs to the UPRTase family. The cofactor is Mg(2+).

It carries out the reaction UMP + diphosphate = 5-phospho-alpha-D-ribose 1-diphosphate + uracil. The protein operates within pyrimidine metabolism; UMP biosynthesis via salvage pathway; UMP from uracil: step 1/1. Allosterically activated by GTP. Catalyzes the conversion of uracil and 5-phospho-alpha-D-ribose 1-diphosphate (PRPP) to UMP and diphosphate. The protein is Uracil phosphoribosyltransferase of Acinetobacter baumannii (strain AB307-0294).